The following is a 218-amino-acid chain: MIRLLKKLAVFLIILVGILLLGGIATAGYFAFTYREPINNYYKEGYNKISEYNTEIKKISQNIFQNNLVKTLSEVEKSLNEGRKLTQNNSFASGLDSSLNALEGSLKKINNFDSNAAFTQIKHTLNNITSFVDQMLEKFPNPNQNDDFKRYLTEVSQILFYTGISIIGAFFVSGFLLILFTKKVYGVRVSRFNPQRLLKKHLVLLLRDEEVYDAVFGN.

2 helical membrane passes run 8 to 28 and 158 to 178; these read LAVF…ATAG and ILFY…FLLI.

It localises to the cell membrane. This is an uncharacterized protein from Mycoplasma genitalium (strain ATCC 33530 / DSM 19775 / NCTC 10195 / G37) (Mycoplasmoides genitalium).